The primary structure comprises 215 residues: UPF0502 protein YceH (215 aa).

Lys-80 is modified (N6-acetyllysine).

The protein belongs to the UPF0502 family.

The sequence is that of UPF0502 protein YceH from Escherichia coli O157:H7.